Consider the following 605-residue polypeptide: Elongation factor 4 (605 aa).

One can recognise a tr-type G domain in the interval 11–193 (KRIRNFSIIA…RIVTQISPPK (183 aa)). GTP contacts are provided by residues 23–28 (DHGKST) and 140–143 (NKVD).

This sequence belongs to the TRAFAC class translation factor GTPase superfamily. Classic translation factor GTPase family. LepA subfamily.

The protein localises to the cell membrane. It catalyses the reaction GTP + H2O = GDP + phosphate + H(+). Functionally, required for accurate and efficient protein synthesis under certain stress conditions. May act as a fidelity factor of the translation reaction, by catalyzing a one-codon backward translocation of tRNAs on improperly translocated ribosomes. Back-translocation proceeds from a post-translocation (POST) complex to a pre-translocation (PRE) complex, thus giving elongation factor G a second chance to translocate the tRNAs correctly. Binds to ribosomes in a GTP-dependent manner. The polypeptide is Elongation factor 4 (Phytoplasma australiense).